We begin with the raw amino-acid sequence, 1319 residues long: ERAD-associated E3 ubiquitin-protein ligase DOA10 (1319 aa).

Position 1 is an N-acetylmethionine (M1). Residues 1 to 131 (MDVDSDVNVS…LTFFEKARLA (131 aa)) are Cytoplasmic-facing. The RING-CH-type zinc-finger motif lies at 31–100 (DDAPSGATCR…DICHYPIQFK (70 aa)). The Zn(2+) site is built by C39, C42, C56, C58, H66, C69, C90, and C93. Residues 132–152 (LTIGLAAVLYIIGVPLVWNMF) traverse the membrane as a helical segment. At 153 to 203 (GKLYTMMLDGSSPYPGDFLKSLIYGYDQSATPELTTRAIFYQLLQNHSFTS) the chain is on the lumenal side. Residues 204–224 (LQFIMIVILHIALYFQYDMIV) traverse the membrane as a helical segment. Residues 225-468 (REDVFSKMVF…GPLVINLKLK (244 aa)) lie on the Cytoplasmic side of the membrane. The segment covering 291–306 (ADNNNNVINPRNDNVP) has biased composition (low complexity). Disordered stretches follow at residues 291–315 (ADNN…DHRN) and 329–381 (EATE…EADY). Residues 469–489 (LLNVIAYFIIAVVFTAIYLAI) traverse the membrane as a helical segment. The Lumenal segment spans residues 490-491 (SY). The helical transmembrane segment at 492-512 (LFPTFIGFGLLKIYFGIFKVI) threads the bilayer. The Cytoplasmic portion of the chain corresponds to 513 to 626 (LRGLCHLYYL…LFALKCTFKV (114 aa)). A helical membrane pass occupies residues 627 to 647 (FTLFFIELAGFPILAGVMLDF). The Lumenal segment spans residues 648-660 (SLFCPILASNSRM). A helical membrane pass occupies residues 661–681 (LWVPSICAIWPPFSLFVYWTI). Residues 682-739 (GTLYMYWFAKYIGMIRKNIIRPGVLFFIRSPEDPNIKILHDSLIHPMSIQLSRLCLSM) are Cytoplasmic-facing. A helical membrane pass occupies residues 740–760 (FIYAIFIVLGFGFHTRIFFPF). Residues 761 to 777 (MLKSNLLSVPEAYKPTS) are Lumenal-facing. A helical membrane pass occupies residues 778–797 (IISWKFNTILLTLYFTKRIL). At 798–965 (ESSSYVKPLL…YVPPDFRLRY (168 aa)) the chain is on the cytoplasmic side. A helical membrane pass occupies residues 966-986 (MTLLGLVWLFASILMLGVTFI). Topologically, residues 987–1019 (SQALINFVCSFGFLPVVKLLLGERNKVYVAWKE) are lumenal. The chain crosses the membrane as a helical span at residues 1020-1040 (LSDISYSYLNIYYVCVGSVCL). Topologically, residues 1041 to 1113 (SKIAKDILHF…IFDSMLVKYN (73 aa)) are cytoplasmic. The helical transmembrane segment at 1114–1134 (LMVFIAIMIAVIRTMVSWVVL) threads the bilayer. Topologically, residues 1135 to 1168 (TDGILACYNYLTIRVFGNSSYTIGNSKWFKYDES) are lumenal. The helical transmembrane segment at 1169–1189 (LLFVVWIISSMVNFGTGYKSL) threads the bilayer. Residues 1190-1213 (KLFFRNRNTSKLNFLKTMALELFK) lie on the Cytoplasmic side of the membrane. Residues 1214-1234 (QGFLHMVIYVLPIIILSLVFL) form a helical membrane-spanning segment. Over 1235–1270 (RDVSTKQIIDISHGSRSFTLSLNESFPTWTRMQDIY) the chain is Lumenal. Residues 1271-1291 (FGLLIALESFTFFFQATVLFI) traverse the membrane as a helical segment. The Cytoplasmic segment spans residues 1292-1319 (QWFKSTVQNVKDEVYTKGRALENLPDES).

It belongs to the DOA10/MARCH6 family. As to quaternary structure, component of the DOA10 ubiquitin ligase complex which contains E3 ligase SSM4/DOA10 and CDC48-binding protein UBX2/SEL1. The DOA10 complex interacts with the heterotrimeric CDC48-NPL4-UFD1 ATPase complex which is recruited by UBX2/SEL1 via its interaction with CDC48. Interacts with its associated ubiquitin conjugating enzymes UBC6 and UBC7 with its membrane anchor CUE1. Interacts with PEX29.

The protein resides in the endoplasmic reticulum membrane. It is found in the nucleus inner membrane. The enzyme catalyses S-ubiquitinyl-[E2 ubiquitin-conjugating enzyme]-L-cysteine + [acceptor protein]-L-lysine = [E2 ubiquitin-conjugating enzyme]-L-cysteine + N(6)-ubiquitinyl-[acceptor protein]-L-lysine.. Its pathway is protein modification; protein ubiquitination. In terms of biological role, E3 ubiquitin-protein ligase which accepts ubiquitin specifically from endoplasmic reticulum-associated UBC6 and UBC7 E2 ligases, and transfers it to substrates promoting their degradation. Mediates the degradation of a broad range of substrates, including endoplasmic reticulum membrane proteins (ERQC), soluble nuclear proteins and soluble cytoplasmic proteins (CytoQC). Component of the DOA10 ubiquitin ligase complex, which is part of the ERAD-C pathway responsible for the rapid degradation of membrane proteins with misfolded cytoplasmic domains. ERAD-C substrates are ubiquitinated through DOA10 in conjunction with the E2 ubiquitin-conjugating enzymes UBC6 and UBC7-CUE1. Ubiquitinated substrates are then removed to the cytosol via the action of the UFD1-NPL4-CDC48/p97 (UNC) AAA ATPase complex and targeted to the proteasome. Also recognizes the N-terminally acetylated residue of proteins as degradation signal (degron). N-terminally acetylated target proteins include MATALPHA2, TBF1, SLK19, YMR090W, HIS3, HSP104, UBP6 and ARO8. Catalyzes ubiquitination of mislocalized tail-anchored proteins that are extracted from the mitochondrion membrane by MSP1: following extraction, mistargeted proteins are transferred to the endoplasmic reticulum, where they are ubiquitinated by DOA10 and degraded by the proteasome. The protein is ERAD-associated E3 ubiquitin-protein ligase DOA10 (SSM4) of Saccharomyces cerevisiae (strain ATCC 204508 / S288c) (Baker's yeast).